A 410-amino-acid chain; its full sequence is Mating-type locus allele B7 protein (410 aa).

The interval 1-110 (MSSDPNFSLT…VNVGSPAVGC (110 aa)) is variable domain between B alleles. The segment at residues 107–184 (AVGCRNLSED…NARRRSGWSH (78 aa)) is a DNA-binding region (homeobox; TALE-type). Residues 111-410 (RNLSEDLPAY…PFLCLSVAFV (300 aa)) form a highly conserved between B alleles region. Disordered stretches follow at residues 202 to 225 (RAKL…SNNL), 278 to 336 (TPKP…PELS), and 374 to 394 (ARGN…QPDE). Residues 276-308 (KKTPKPGMPRPVTTVAKRQPARKTKPAAKPNSR) carry the Nuclear localization signal motif. Residues 306–336 (NSRTANPRASTTPSIDSTLDSSKLESTPELS) show a composition bias toward polar residues. The tract at residues 333–410 (PELSMCSTAD…PFLCLSVAFV (78 aa)) is not essential for B7 function. Over residues 375–388 (RGNRKVKALPKRAG) the composition is skewed to basic residues.

The protein belongs to the TALE/M-ATYP homeobox family.

The protein resides in the nucleus. Functionally, the B locus has at least 25 alleles, and any combination of two different B alleles yields a multimeric regulatory protein, that activates genes responsible for the pathogenicity and for the sexual development of the fungus within the corn plant. This Mycosarcoma maydis (Corn smut fungus) protein is Mating-type locus allele B7 protein.